Reading from the N-terminus, the 295-residue chain is Cuticle collagen 3A3 (295 aa).

Residues 81-278 (AITSSEENGG…GRPGEPGICP (198 aa)) are disordered. Composition is skewed to pro residues over residues 97 to 109 (PGPP…PGRP) and 146 to 160 (AGPP…PPGD). 3 triple-helical region regions span residues 98–127 (GPPG…PGLP), 147–203 (GPPG…VGED), and 212–277 (GDQG…PGIC). The segment covering 172–182 (QDGIPGQQGTK) has biased composition (low complexity). The span at 217-228 (PGEPGPEGPPGE) shows a compositional bias: pro residues. Residues 229–244 (PGLQGPVGMPGQVGQK) are compositionally biased toward low complexity. Positions 261-271 (RPGPPGPPGRP) are enriched in pro residues.

This sequence belongs to the cuticular collagen family.

Functionally, nematode cuticles are composed largely of collagen-like proteins. The cuticle functions both as an exoskeleton and as a barrier to protect the worm from its environment. This Haemonchus contortus (Barber pole worm) protein is Cuticle collagen 3A3 (3A3).